Reading from the N-terminus, the 168-residue chain is Large ribosomal subunit protein uL10 (168 aa).

The protein belongs to the universal ribosomal protein uL10 family. In terms of assembly, part of the ribosomal stalk of the 50S ribosomal subunit. The N-terminus interacts with L11 and the large rRNA to form the base of the stalk. The C-terminus forms an elongated spine to which L12 dimers bind in a sequential fashion forming a multimeric L10(L12)X complex.

Its function is as follows. Forms part of the ribosomal stalk, playing a central role in the interaction of the ribosome with GTP-bound translation factors. The protein is Large ribosomal subunit protein uL10 (rplJ) of Mycoplasmopsis pulmonis (strain UAB CTIP) (Mycoplasma pulmonis).